Here is a 565-residue protein sequence, read N- to C-terminus: Thiol:disulfide interchange protein DsbD (565 aa).

The first 19 residues, 1-19 (MAQRIFTLILLLCSTSVFA), serve as a signal peptide directing secretion. 2 disulfide bridges follow: cysteine 122-cysteine 128 and cysteine 182-cysteine 304. The next 7 helical transmembrane spans lie at 163–183 (LPFS…TPCV), 208–228 (LLTF…GLVV), 243–263 (YVLI…FGLF), 296–316 (IAGL…LLYI), 323–343 (WLGG…LMLI), 357–377 (WMEQ…VFLL), and 384–404 (VWGL…AFIT). A Thioredoxin domain is found at 434–565 (WAFGATHTAQ…FSAHLRDRQP (132 aa)). Cysteine 480 and cysteine 483 are oxidised to a cystine.

The protein belongs to the thioredoxin family. DsbD subfamily.

Its subcellular location is the cell inner membrane. The catalysed reaction is [protein]-dithiol + NAD(+) = [protein]-disulfide + NADH + H(+). It catalyses the reaction [protein]-dithiol + NADP(+) = [protein]-disulfide + NADPH + H(+). Functionally, required to facilitate the formation of correct disulfide bonds in some periplasmic proteins and for the assembly of the periplasmic c-type cytochromes. Acts by transferring electrons from cytoplasmic thioredoxin to the periplasm. This transfer involves a cascade of disulfide bond formation and reduction steps. The polypeptide is Thiol:disulfide interchange protein DsbD (Shigella flexneri serotype 5b (strain 8401)).